Here is a 425-residue protein sequence, read N- to C-terminus: F-box/LRR-repeat protein At3g59250 (425 aa).

The 49-residue stretch at 6-54 (KDKISNLPEALICHILSFLPIEDSALTSVLSKRWRYLFAFRPNLVFDDS) folds into the F-box domain. LRR repeat units follow at residues 86 to 113 (DLQVNVNGVRLPSKVFVSKSLVRLRIES), 138 to 163 (MLGKGEDCFEKLTSGCHVLEELVLNN), 185 to 210 (CTESYDKNPHSVLFDTPNLVYLKYSD), 264 to 293 (CLSANSLAVLTFCCESIPVFNNLIQLTIKT), and 294 to 319 (NQSVGWESLPALLKNCPILETLVFEG).

In Arabidopsis thaliana (Mouse-ear cress), this protein is F-box/LRR-repeat protein At3g59250.